We begin with the raw amino-acid sequence, 426 residues long: Serine--tRNA ligase (426 aa).

233-235 (TAE) is an L-serine binding site. 264–266 (RSE) serves as a coordination point for ATP. E287 is a binding site for L-serine. 351 to 354 (EISS) contributes to the ATP binding site. Position 385 (S385) interacts with L-serine.

It belongs to the class-II aminoacyl-tRNA synthetase family. Type-1 seryl-tRNA synthetase subfamily. Homodimer. The tRNA molecule binds across the dimer.

It is found in the cytoplasm. The enzyme catalyses tRNA(Ser) + L-serine + ATP = L-seryl-tRNA(Ser) + AMP + diphosphate + H(+). It carries out the reaction tRNA(Sec) + L-serine + ATP = L-seryl-tRNA(Sec) + AMP + diphosphate + H(+). Its pathway is aminoacyl-tRNA biosynthesis; selenocysteinyl-tRNA(Sec) biosynthesis; L-seryl-tRNA(Sec) from L-serine and tRNA(Sec): step 1/1. Its function is as follows. Catalyzes the attachment of serine to tRNA(Ser). Is also able to aminoacylate tRNA(Sec) with serine, to form the misacylated tRNA L-seryl-tRNA(Sec), which will be further converted into selenocysteinyl-tRNA(Sec). The protein is Serine--tRNA ligase of Brachyspira hyodysenteriae (strain ATCC 49526 / WA1).